Here is a 354-residue protein sequence, read N- to C-terminus: S-adenosylmethionine:tRNA ribosyltransferase-isomerase (354 aa).

It belongs to the QueA family. In terms of assembly, monomer.

Its subcellular location is the cytoplasm. The enzyme catalyses 7-aminomethyl-7-carbaguanosine(34) in tRNA + S-adenosyl-L-methionine = epoxyqueuosine(34) in tRNA + adenine + L-methionine + 2 H(+). The protein operates within tRNA modification; tRNA-queuosine biosynthesis. In terms of biological role, transfers and isomerizes the ribose moiety from AdoMet to the 7-aminomethyl group of 7-deazaguanine (preQ1-tRNA) to give epoxyqueuosine (oQ-tRNA). This is S-adenosylmethionine:tRNA ribosyltransferase-isomerase from Dichelobacter nodosus (strain VCS1703A).